The sequence spans 201 residues: FMN-dependent NADH:quinone oxidoreductase (201 aa).

FMN is bound by residues serine 9, 16–18 (SVS), and 93–96 (MYNF).

Belongs to the azoreductase type 1 family. As to quaternary structure, homodimer. Requires FMN as cofactor.

The enzyme catalyses 2 a quinone + NADH + H(+) = 2 a 1,4-benzosemiquinone + NAD(+). It catalyses the reaction N,N-dimethyl-1,4-phenylenediamine + anthranilate + 2 NAD(+) = 2-(4-dimethylaminophenyl)diazenylbenzoate + 2 NADH + 2 H(+). Quinone reductase that provides resistance to thiol-specific stress caused by electrophilic quinones. Functionally, also exhibits azoreductase activity. Catalyzes the reductive cleavage of the azo bond in aromatic azo compounds to the corresponding amines. The protein is FMN-dependent NADH:quinone oxidoreductase of Gluconacetobacter diazotrophicus (strain ATCC 49037 / DSM 5601 / CCUG 37298 / CIP 103539 / LMG 7603 / PAl5).